The primary structure comprises 243 residues: Carboxy-S-adenosyl-L-methionine synthase (243 aa).

Residues Tyr-40, 65–67, 90–91, 118–119, Asn-133, and Arg-200 each bind S-adenosyl-L-methionine; these read GCS, DN, and DI.

The protein belongs to the class I-like SAM-binding methyltransferase superfamily. Cx-SAM synthase family. Homodimer.

It catalyses the reaction prephenate + S-adenosyl-L-methionine = carboxy-S-adenosyl-L-methionine + 3-phenylpyruvate + H2O. Functionally, catalyzes the conversion of S-adenosyl-L-methionine (SAM) to carboxy-S-adenosyl-L-methionine (Cx-SAM). The protein is Carboxy-S-adenosyl-L-methionine synthase of Shewanella loihica (strain ATCC BAA-1088 / PV-4).